Consider the following 410-residue polypeptide: Pyrophosphate--fructose 6-phosphate 1-phosphotransferase (410 aa).

Position 12 (Gly-12) interacts with diphosphate. Asp-121 lines the Mg(2+) pocket. Substrate-binding positions include 149–151 (TID), 194–196 (MGR), Glu-266, and 323–326 (YFSR). The active-site Proton acceptor is the Asp-151.

This sequence belongs to the phosphofructokinase type A (PFKA) family. PPi-dependent PFK group II subfamily. Clade 'P' sub-subfamily. As to quaternary structure, homodimer or homotetramer. Mg(2+) is required as a cofactor.

The protein resides in the cytoplasm. It carries out the reaction beta-D-fructose 6-phosphate + diphosphate = beta-D-fructose 1,6-bisphosphate + phosphate + H(+). Its pathway is carbohydrate degradation; glycolysis; D-glyceraldehyde 3-phosphate and glycerone phosphate from D-glucose: step 3/4. Its activity is regulated as follows. Non-allosteric. In terms of biological role, catalyzes the phosphorylation of D-fructose 6-phosphate, the first committing step of glycolysis. Uses inorganic phosphate (PPi) as phosphoryl donor instead of ATP like common ATP-dependent phosphofructokinases (ATP-PFKs), which renders the reaction reversible, and can thus function both in glycolysis and gluconeogenesis. Consistently, PPi-PFK can replace the enzymes of both the forward (ATP-PFK) and reverse (fructose-bisphosphatase (FBPase)) reactions. This Mastigamoeba balamuthi (Phreatamoeba balamuthi) protein is Pyrophosphate--fructose 6-phosphate 1-phosphotransferase.